The following is a 3130-amino-acid chain: DNA polymerase zeta catalytic subunit (3130 aa).

6 disordered regions span residues Ala-263–Thr-295, Gly-425–Gln-457, Leu-487–Ser-510, Leu-524–Ile-548, Pro-697–Asn-728, and Val-817–Asn-871. Positions Ser-286 to Thr-295 are enriched in basic and acidic residues. Positions Glu-497–Trp-509 are enriched in acidic residues. Polar residues-rich tracts occupy residues Asp-533–Ile-548 and Glu-699–Asn-728. Positions Ser-828–Ala-838 are enriched in basic residues. Residues Glu-842–Lys-854 are compositionally biased toward low complexity. Residues Asp-855–Asn-866 are compositionally biased toward polar residues. Ser-1030 is modified (phosphoserine). Disordered regions lie at residues Tyr-1035–Glu-1095, Ser-1162–Ile-1231, and Arg-1537–Lys-1600. Phosphothreonine is present on Thr-1041. Composition is skewed to basic residues over residues Lys-1043–Lys-1061 and Lys-1166–Ala-1179. Residues Lys-1213–Ile-1231 are compositionally biased toward basic and acidic residues. Residues Lys-1540 to Leu-1565 are compositionally biased toward polar residues. A compositionally biased stretch (basic residues) spans Ala-1570–Thr-1589. A compositionally biased stretch (basic and acidic residues) spans Lys-1590 to Lys-1600. Ser-1724 is modified (phosphoserine). 5 disordered regions span residues Asn-1845 to Met-1882, Asn-1962 to Pro-1984, Glu-2017 to Pro-2050, Pro-2080 to Glu-2150, and Ala-2216 to Gly-2236. Positions Met-1847–Asp-1898 are mediates interaction with MAD2L2. The segment covering Thr-1849–Ser-1865 has biased composition (low complexity). Residue Ser-1967 is modified to Phosphoserine. The span at Pro-2080–Gln-2092 shows a compositional bias: polar residues. Residues Tyr-2113–Ser-2122 show a composition bias toward low complexity. The segment covering Pro-2221–Gly-2236 has biased composition (polar residues). Residues Cys-3042, Cys-3045, Cys-3054, and Cys-3057 each coordinate Zn(2+). The CysA-type zinc finger occupies Cys-3042–Cys-3057. Residues Cys-3086, Cys-3089, Cys-3099, and Cys-3104 each contribute to the [4Fe-4S] cluster site. Residues Cys-3086 to Cys-3104 carry the CysB motif motif.

It belongs to the DNA polymerase type-B family. As to quaternary structure, heterodimer with MAD2L2. This dimer forms the minimal DNA polymerase zeta complex (Pol-zeta2), with REV3L bearing DNA polymerase catalytic activity, although its activity is very low in this context. Component of the tetrameric Pol-zeta complex (Pol-zeta4), which consists of REV3L, MAD2L2, POLD2 and POLD3; Pol-zeta4 is the fully active form of DNA polymerase zeta. Requires [4Fe-4S] cluster as cofactor. Ubiquitously expressed.

It localises to the nucleus. It carries out the reaction DNA(n) + a 2'-deoxyribonucleoside 5'-triphosphate = DNA(n+1) + diphosphate. Catalytic subunit of the DNA polymerase zeta complex, an error-prone polymerase specialized in translesion DNA synthesis (TLS). Lacks an intrinsic 3'-5' exonuclease activity and thus has no proofreading function. The sequence is that of DNA polymerase zeta catalytic subunit (REV3L) from Homo sapiens (Human).